We begin with the raw amino-acid sequence, 815 residues long: Bifunctional aspartokinase/homoserine dehydrogenase (815 aa).

The segment at 1 to 249 is aspartokinase; that stretch reads MRVLKFGGTS…VPDARLLPTL (249 aa). Positions 250–470 are interface; that stretch reads SYREAMELSY…NNKKVVDMFL (221 aa). ACT domains follow at residues 320–392 and 401–478; these read VSGP…PIEV and VVGD…GVGG. The interval 471–815 is homoserine dehydrogenase; that stretch reads VGVGGVGGEL…FADILRTLQH (345 aa). NAD(+)-binding residues include V473, G475, V476, A504, and T555. V476 provides a ligand contact to NADP(+). Position 476 (V476) interacts with NADPH. Residue T555 coordinates NADP(+). NADPH contacts are provided by T555, S556, and K579. NADP(+) is bound at residue K579. Na(+)-binding residues include E606, V609, A611, and L613. NADP(+) contacts are provided by G664 and E667. Positions 667 and 678 each coordinate L-homoserine. The active-site Proton donor is the K682. G797 contributes to the NAD(+) binding site. Residue G797 coordinates NADP(+). An NADPH-binding site is contributed by G797.

It in the N-terminal section; belongs to the aspartokinase family. In the C-terminal section; belongs to the homoserine dehydrogenase family. In terms of assembly, homotetramer. A metal cation is required as a cofactor.

The catalysed reaction is L-homoserine + NADP(+) = L-aspartate 4-semialdehyde + NADPH + H(+). It carries out the reaction L-homoserine + NAD(+) = L-aspartate 4-semialdehyde + NADH + H(+). It catalyses the reaction L-aspartate + ATP = 4-phospho-L-aspartate + ADP. It functions in the pathway amino-acid biosynthesis; L-lysine biosynthesis via DAP pathway; (S)-tetrahydrodipicolinate from L-aspartate: step 1/4. The protein operates within amino-acid biosynthesis; L-methionine biosynthesis via de novo pathway; L-homoserine from L-aspartate: step 1/3. It participates in amino-acid biosynthesis; L-methionine biosynthesis via de novo pathway; L-homoserine from L-aspartate: step 3/3. Its pathway is amino-acid biosynthesis; L-threonine biosynthesis; L-threonine from L-aspartate: step 1/5. It functions in the pathway amino-acid biosynthesis; L-threonine biosynthesis; L-threonine from L-aspartate: step 3/5. Functionally, bifunctional aspartate kinase and homoserine dehydrogenase that catalyzes the first and the third steps toward the synthesis of lysine, methionine and threonine from aspartate. In Haemophilus influenzae (strain ATCC 51907 / DSM 11121 / KW20 / Rd), this protein is Bifunctional aspartokinase/homoserine dehydrogenase (thrA).